The primary structure comprises 361 residues: Aromatic amino acid aminotransferase (361 aa).

Lysine 215 is modified (N6-(pyridoxal phosphate)lysine).

Belongs to the class-II pyridoxal-phosphate-dependent aminotransferase family. As to quaternary structure, homodimer. Requires pyridoxal 5'-phosphate as cofactor.

The enzyme catalyses an aromatic L-alpha-amino acid + 2-oxoglutarate = an aromatic oxo-acid + L-glutamate. Functionally, aminotransferase that catalyzes the conversion of aromatic amino acids and 2-oxoglutarate into corresponding aromatic oxo acids and L-glutamate. The chain is Aromatic amino acid aminotransferase from Mycolicibacterium smegmatis (strain ATCC 700084 / mc(2)155) (Mycobacterium smegmatis).